A 137-amino-acid polypeptide reads, in one-letter code: NADPH-dependent 7-cyano-7-deazaguanine reductase (137 aa).

Cys-50 (thioimide intermediate) is an active-site residue. The Proton donor role is filled by Asp-57. Substrate contacts are provided by residues 72 to 74 (VEL) and 91 to 92 (HE).

It belongs to the GTP cyclohydrolase I family. QueF type 1 subfamily.

Its subcellular location is the cytoplasm. It catalyses the reaction 7-aminomethyl-7-carbaguanine + 2 NADP(+) = 7-cyano-7-deazaguanine + 2 NADPH + 3 H(+). The protein operates within tRNA modification; tRNA-queuosine biosynthesis. Functionally, catalyzes the NADPH-dependent reduction of 7-cyano-7-deazaguanine (preQ0) to 7-aminomethyl-7-deazaguanine (preQ1). The sequence is that of NADPH-dependent 7-cyano-7-deazaguanine reductase from Synechocystis sp. (strain ATCC 27184 / PCC 6803 / Kazusa).